Consider the following 185-residue polypeptide: Ribosome-recycling factor (185 aa).

The disordered stretch occupies residues 138–157 (ELKKLEKDHTASEDEVKRAQ).

The protein belongs to the RRF family.

It localises to the cytoplasm. Its function is as follows. Responsible for the release of ribosomes from messenger RNA at the termination of protein biosynthesis. May increase the efficiency of translation by recycling ribosomes from one round of translation to another. This is Ribosome-recycling factor from Desulfitobacterium hafniense (strain DSM 10664 / DCB-2).